A 474-amino-acid polypeptide reads, in one-letter code: Glutathione synthetase (474 aa).

A substrate-binding site is contributed by R125. ATP is bound at residue E144. The Mg(2+) site is built by E144 and N146. Substrate contacts are provided by residues 148-151 (IAAS), 214-216 (QRN), Q220, and 267-270 (RTGY). ATP contacts are provided by residues K305, 364-373 (KPQREGGGNN), Y375, 398-401 (MDKI), and E425. Mg(2+) is bound at residue E368. R450 provides a ligand contact to substrate. ATP-binding residues include K452 and D458. 461-462 (VA) is a binding site for substrate.

This sequence belongs to the eukaryotic GSH synthase family. Homodimer. Requires Mg(2+) as cofactor. Expressed ubiquitously.

The catalysed reaction is gamma-L-glutamyl-L-cysteine + glycine + ATP = glutathione + ADP + phosphate + H(+). It carries out the reaction gamma-L-glutamyl-(2S)-2-aminobutanoate + glycine + ATP = ophthalmate + ADP + phosphate + H(+). It participates in sulfur metabolism; glutathione biosynthesis; glutathione from L-cysteine and L-glutamate: step 2/2. Functionally, catalyzes the production of glutathione from gamma-glutamylcysteine and glycine in an ATP-dependent manner. Glutathione (gamma-glutamylcysteinylglycine, GSH) is the most abundant intracellular thiol in living aerobic cells and is required for numerous processes including the protection of cells against oxidative damage, amino acid transport, the detoxification of foreign compounds, the maintenance of protein sulfhydryl groups in a reduced state and acts as a cofactor for a number of enzymes. Participates in ophthalmate biosynthesis in hepatocytes. The polypeptide is Glutathione synthetase (Xenopus laevis (African clawed frog)).